A 196-amino-acid polypeptide reads, in one-letter code: HTH-type transcriptional regulator Hpr (196 aa).

Residues 13-157 form the HTH marR-type domain; sequence SIVFSHKMAL…LICIVRHIYG (145 aa). Positions 63-86 form a DNA-binding region, H-T-H motif; the sequence is ISDIASHGVMHVSTAFNFSKKLEA.

Homodimer.

Its function is as follows. Negative regulator of protease production and sporulation. This is HTH-type transcriptional regulator Hpr from Shouchella clausii (strain KSM-K16) (Alkalihalobacillus clausii).